The following is a 421-amino-acid chain: Serine hydroxymethyltransferase (421 aa).

Residues leucine 121 and 125-127 (GHL) each bind (6S)-5,6,7,8-tetrahydrofolate. Lysine 229 carries the N6-(pyridoxal phosphate)lysine modification.

It belongs to the SHMT family. Homodimer. The cofactor is pyridoxal 5'-phosphate.

It is found in the cytoplasm. The enzyme catalyses (6R)-5,10-methylene-5,6,7,8-tetrahydrofolate + glycine + H2O = (6S)-5,6,7,8-tetrahydrofolate + L-serine. The protein operates within one-carbon metabolism; tetrahydrofolate interconversion. It participates in amino-acid biosynthesis; glycine biosynthesis; glycine from L-serine: step 1/1. In terms of biological role, catalyzes the reversible interconversion of serine and glycine with tetrahydrofolate (THF) serving as the one-carbon carrier. This reaction serves as the major source of one-carbon groups required for the biosynthesis of purines, thymidylate, methionine, and other important biomolecules. Also exhibits THF-independent aldolase activity toward beta-hydroxyamino acids, producing glycine and aldehydes, via a retro-aldol mechanism. The sequence is that of Serine hydroxymethyltransferase from Haemophilus influenzae (strain PittEE).